A 361-amino-acid chain; its full sequence is Eukaryotic translation initiation factor 3 subunit F (361 aa).

Composition is skewed to low complexity over residues 1-11 (MATPVVSASGP) and 21-42 (AAPA…AAAV). Residues 1 to 42 (MATPVVSASGPPATPAPAPVAAPASASASVPAPTPAPAAAAV) are disordered. The residue at position 2 (A2) is an N-acetylalanine. Phosphoserine; by CDK11; in vitro is present on S50. Positions 55–78 (AAAATTAAPGQTPASAQAPAQTPA) are enriched in low complexity. The tract at residues 55–86 (AAAATTAAPGQTPASAQAPAQTPAPALPGPAL) is disordered. An MPN domain is found at 96–226 (VRLHPVILAS…IKAYVSTLMG (131 aa)). K242 is modified (N6-acetyllysine). Residue S262 is modified to Phosphoserine.

Belongs to the eIF-3 subunit F family. In terms of assembly, component of the eukaryotic translation initiation factor 3 (eIF-3) complex, which is composed of 13 subunits: EIF3A, EIF3B, EIF3C, EIF3D, EIF3E, EIF3F, EIF3G, EIF3H, EIF3I, EIF3J, EIF3K, EIF3L and EIF3M. The eIF-3 complex appears to include 3 stable modules: module A is composed of EIF3A, EIF3B, EIF3G and EIF3I; module B is composed of EIF3F, EIF3H, and EIF3M; and module C is composed of EIF3C, EIF3D, EIF3E, EIF3K and EIF3L. EIF3C of module C binds EIF3B of module A and EIF3H of module B, thereby linking the three modules. EIF3J is a labile subunit that binds to the eIF-3 complex via EIF3B. The eIF-3 complex interacts with RPS6KB1 under conditions of nutrient depletion. Mitogenic stimulation leads to binding and activation of a complex composed of MTOR and RPTOR, leading to phosphorylation and release of RPS6KB1 and binding of EIF4B to eIF-3. Interacts with RNF139; the interaction leads to protein translation inhibitions in a ubiquitination-dependent manner. Interacts with DTX1, the interaction is required for deubiquitinating activity towards NOTCH1. Phosphorylation is enhanced upon serum stimulation. Phosphorylated during apoptosis by caspase-processed CDK11.

The protein localises to the cytoplasm. It carries out the reaction Thiol-dependent hydrolysis of ester, thioester, amide, peptide and isopeptide bonds formed by the C-terminal Gly of ubiquitin (a 76-residue protein attached to proteins as an intracellular targeting signal).. Its function is as follows. Component of the eukaryotic translation initiation factor 3 (eIF-3) complex, which is required for several steps in the initiation of protein synthesis. The eIF-3 complex associates with the 40S ribosome and facilitates the recruitment of eIF-1, eIF-1A, eIF-2:GTP:methionyl-tRNAi and eIF-5 to form the 43S pre-initiation complex (43S PIC). The eIF-3 complex stimulates mRNA recruitment to the 43S PIC and scanning of the mRNA for AUG recognition. The eIF-3 complex is also required for disassembly and recycling of post-termination ribosomal complexes and subsequently prevents premature joining of the 40S and 60S ribosomal subunits prior to initiation. The eIF-3 complex specifically targets and initiates translation of a subset of mRNAs involved in cell proliferation, including cell cycling, differentiation and apoptosis, and uses different modes of RNA stem-loop binding to exert either translational activation or repression. In terms of biological role, deubiquitinates activated NOTCH1, promoting its nuclear import, thereby acting as a positive regulator of Notch signaling. This is Eukaryotic translation initiation factor 3 subunit F from Macaca fascicularis (Crab-eating macaque).